The sequence spans 488 residues: Probable glycine dehydrogenase (decarboxylating) subunit 2 (488 aa).

Position 274 is an N6-(pyridoxal phosphate)lysine (Lys-274).

The protein belongs to the GcvP family. C-terminal subunit subfamily. In terms of assembly, the glycine cleavage system is composed of four proteins: P, T, L and H. In this organism, the P 'protein' is a heterodimer of two subunits. Requires pyridoxal 5'-phosphate as cofactor.

The catalysed reaction is N(6)-[(R)-lipoyl]-L-lysyl-[glycine-cleavage complex H protein] + glycine + H(+) = N(6)-[(R)-S(8)-aminomethyldihydrolipoyl]-L-lysyl-[glycine-cleavage complex H protein] + CO2. Its function is as follows. The glycine cleavage system catalyzes the degradation of glycine. The P protein binds the alpha-amino group of glycine through its pyridoxal phosphate cofactor; CO(2) is released and the remaining methylamine moiety is then transferred to the lipoamide cofactor of the H protein. This chain is Probable glycine dehydrogenase (decarboxylating) subunit 2, found in Listeria innocua serovar 6a (strain ATCC BAA-680 / CLIP 11262).